Reading from the N-terminus, the 88-residue chain is Acylphosphatase (88 aa).

An Acylphosphatase-like domain is found at 3 to 88; the sequence is AARFIFTGVV…IPTTEAFVTG (86 aa). Catalysis depends on residues Arg-18 and Asn-36.

The protein belongs to the acylphosphatase family.

The enzyme catalyses an acyl phosphate + H2O = a carboxylate + phosphate + H(+). The protein is Acylphosphatase (acyP) of Xanthomonas campestris pv. campestris (strain 8004).